The following is a 465-amino-acid chain: Hydroxyacid-oxoacid transhydrogenase, mitochondrial (465 aa).

The protein belongs to the iron-containing alcohol dehydrogenase family. Hydroxyacid-oxoacid transhydrogenase subfamily.

The protein localises to the mitochondrion. It carries out the reaction (S)-3-hydroxybutanoate + 2-oxoglutarate = (R)-2-hydroxyglutarate + acetoacetate. The catalysed reaction is 4-hydroxybutanoate + 2-oxoglutarate = (R)-2-hydroxyglutarate + succinate semialdehyde. Functionally, catalyzes the cofactor-independent reversible oxidation of gamma-hydroxybutyrate (GHB) to succinic semialdehyde (SSA) coupled to reduction of 2-ketoglutarate (2-KG) to D-2-hydroxyglutarate (D-2-HG). L-3-hydroxybutyrate (L-3-OHB) is also a substrate for HOT when using 2-KG as hydrogen acceptor, resulting in the formation of D-2-HG. In Caenorhabditis elegans, this protein is Hydroxyacid-oxoacid transhydrogenase, mitochondrial.